Here is a 597-residue protein sequence, read N- to C-terminus: Elongation factor 4 (597 aa).

Residues 4-181 (SKIRNFSIIA…AIVDYVPAPK (178 aa)) form the tr-type G domain. Residues 16-21 (DHGKST) and 128-131 (NKID) each bind GTP.

This sequence belongs to the TRAFAC class translation factor GTPase superfamily. Classic translation factor GTPase family. LepA subfamily.

Its subcellular location is the cell membrane. It catalyses the reaction GTP + H2O = GDP + phosphate + H(+). In terms of biological role, required for accurate and efficient protein synthesis under certain stress conditions. May act as a fidelity factor of the translation reaction, by catalyzing a one-codon backward translocation of tRNAs on improperly translocated ribosomes. Back-translocation proceeds from a post-translocation (POST) complex to a pre-translocation (PRE) complex, thus giving elongation factor G a second chance to translocate the tRNAs correctly. Binds to ribosomes in a GTP-dependent manner. In Mycoplasmopsis agalactiae (strain NCTC 10123 / CIP 59.7 / PG2) (Mycoplasma agalactiae), this protein is Elongation factor 4.